The following is a 155-amino-acid chain: Small ribosomal subunit protein uS7 (155 aa).

The protein belongs to the universal ribosomal protein uS7 family. As to quaternary structure, part of the 30S ribosomal subunit. Contacts proteins S9 and S11.

Its function is as follows. One of the primary rRNA binding proteins, it binds directly to 16S rRNA where it nucleates assembly of the head domain of the 30S subunit. Is located at the subunit interface close to the decoding center, probably blocks exit of the E-site tRNA. This is Small ribosomal subunit protein uS7 from Mycoplasma capricolum subsp. capricolum (strain California kid / ATCC 27343 / NCTC 10154).